The sequence spans 327 residues: Biotin synthase (327 aa).

The Radical SAM core domain maps to tyrosine 48–arginine 278. 3 residues coordinate [4Fe-4S] cluster: cysteine 66, cysteine 70, and cysteine 73. [2Fe-2S] cluster is bound by residues serine 143 and cysteine 203.

This sequence belongs to the radical SAM superfamily. Biotin synthase family. As to quaternary structure, homodimer. Requires [4Fe-4S] cluster as cofactor. [2Fe-2S] cluster serves as cofactor.

It carries out the reaction (4R,5S)-dethiobiotin + (sulfur carrier)-SH + 2 reduced [2Fe-2S]-[ferredoxin] + 2 S-adenosyl-L-methionine = (sulfur carrier)-H + biotin + 2 5'-deoxyadenosine + 2 L-methionine + 2 oxidized [2Fe-2S]-[ferredoxin]. It participates in cofactor biosynthesis; biotin biosynthesis; biotin from 7,8-diaminononanoate: step 2/2. Functionally, catalyzes the conversion of dethiobiotin (DTB) to biotin by the insertion of a sulfur atom into dethiobiotin via a radical-based mechanism. This Syntrophotalea carbinolica (strain DSM 2380 / NBRC 103641 / GraBd1) (Pelobacter carbinolicus) protein is Biotin synthase.